We begin with the raw amino-acid sequence, 633 residues long: Pentatricopeptide repeat-containing protein At3g24000, mitochondrial (633 aa).

The N-terminal 63 residues, methionine 1–tyrosine 63, are a transit peptide targeting the mitochondrion. 10 PPR repeats span residues aspartate 94–arginine 124, aspartate 125–proline 159, asparagine 160–serine 194, asparagine 195–arginine 225, asparagine 226–proline 260, serine 261–leucine 295, valine 296–arginine 326, aspartate 327–proline 361, asparagine 362–proline 396, and glutamate 397–alanine 431. The tract at residues isoleucine 432 to glutamate 507 is type E motif. The segment at asparagine 508–lysine 538 is type E(+) motif. Residues glutamate 539–tryptophan 633 are type DYW motif.

Belongs to the PPR family. PCMP-H subfamily.

The protein localises to the mitochondrion. The polypeptide is Pentatricopeptide repeat-containing protein At3g24000, mitochondrial (PCMP-H87) (Arabidopsis thaliana (Mouse-ear cress)).